The primary structure comprises 785 residues: Hypha-specific G1 cyclin-related protein 1 (785 aa).

A disordered region spans residues 1–42; that stretch reads MINITKPLTPKSISQQKQQQQHPYKNISTTKSNNNPQASGSK. Positions 22-42 are enriched in polar residues; that stretch reads HPYKNISTTKSNNNPQASGSK. The region spanning 71–238 is the Cyclin N-terminal domain; it reads DIYDIMVNLI…VLNTLEWSLN (168 aa). Disordered stretches follow at residues 408–433, 447–679, and 750–774; these read TTTT…TTPV, VSST…SKFN, and NNSG…DSPI. Low complexity-rich tracts occupy residues 447 to 473 and 484 to 512; these read VSST…STTP and NYSN…NNTT. The segment covering 513 to 535 has biased composition (polar residues); sequence ISPVDSTTINSHTKNSSQLNYQY. Low complexity predominate over residues 579-613; sequence NSANKNSNKSNSANNNNTTTIATTTTTTTNNNNNS. The span at 621-631 shows a compositional bias: polar residues; it reads LSYNNYFNSPN. The span at 646-679 shows a compositional bias: low complexity; the sequence is QQQQQNQGQNQQQPLQLYQGDNNNNGTNTNSKFN. Positions 754-764 are enriched in gly residues; the sequence is NGKGNGNGGSG. Residues 765-774 show a composition bias toward polar residues; the sequence is TPISENDSPI.

It belongs to the cyclin family. In terms of assembly, interacts with CDC28.

Hypha-specific G1 cyclin-related protein involved in regulation of morphogenesis and opaque cells filamentous growth, and required for both conventional and pheromone-stimulated biofilm formation. Required to maintain hyphal tip localization of actin and SPA2. Regulates the CDC28 kinase during hyphal growth. The CDC28-HGC1 complex phosphorylates and prevents RGA2 from localizing to hyphal tips, leading to localized CDC42 activation for hyphal extension. The CDC28-HGC1 complex also phosphorylates SEC2 and maintains CDC11 phosphorylation throughout hyphal growth. Moreover CDC28-HGC1 phosphorylation of EFG1 represses cell separation genes during hyphal growth. Also partially controls SEP7 phosphorylation status and subsequent septin ring dynamics. Required for virulence and especially mediates dynamic adhesion to endothelium of blood vessels during circulation. The protein is Hypha-specific G1 cyclin-related protein 1 (HGC1) of Candida albicans (strain SC5314 / ATCC MYA-2876) (Yeast).